The primary structure comprises 392 residues: INCREASED PETAL GROWTH ANISOTROPY 1-like protein 1 (392 aa).

A coiled-coil region spans residues 11-52 (LLRLVKELQAYLVRNDKLEKENHELRQEVARLRAQVSNLKSH). Polar residues-rich tracts occupy residues 65 to 76 (QSSYDGSNTDGS) and 100 to 109 (PTIQGQSTAT). Residues 65–128 (QSSYDGSNTD…SKRTLGKRSV (64 aa)) are disordered. The stretch at 269 to 299 (KDSLTQALQRIQSLQDRLEESVNNTEKMRDS) forms a coiled coil.

This sequence belongs to the IPGA1 family.

The protein localises to the cytoplasm. It is found in the cytoskeleton. Microtubule-associated protein probably involved in the regulation of microtubule organization. The protein is INCREASED PETAL GROWTH ANISOTROPY 1-like protein 1 of Arabidopsis thaliana (Mouse-ear cress).